The chain runs to 624 residues: Bifunctional protein ArgH (624 aa).

The argininosuccinate lyase stretch occupies residues 1 to 466; the sequence is MALWGGRFSQ…QERDNAGVKV (466 aa). An N-acetyltransferase domain is found at 464–614; sequence VKVRPARLTD…DEVALEVNLQ (151 aa). The interval 467–624 is probable acetyltransferase; sequence RPARLTDLDA…EQVIIKSSVA (158 aa).

This sequence in the N-terminal section; belongs to the lyase 1 family. Argininosuccinate lyase subfamily.

The protein localises to the cytoplasm. The enzyme catalyses 2-(N(omega)-L-arginino)succinate = fumarate + L-arginine. Its pathway is amino-acid biosynthesis; L-arginine biosynthesis; L-arginine from L-ornithine and carbamoyl phosphate: step 3/3. The sequence is that of Bifunctional protein ArgH (argH) from Aliivibrio fischeri (strain ATCC 700601 / ES114) (Vibrio fischeri).